The following is a 333-amino-acid chain: Transcription factor MYB36 (333 aa).

2 HTH myb-type domains span residues 9 to 62 (KANV…LNYL) and 63 to 117 (RPNI…KKKL). DNA-binding regions (H-T-H motif) lie at residues 38 to 62 (WIAL…LNYL) and 90 to 113 (WSII…NTKL). Residues 119-150 (GRQKQMNRQDSITDSTENNLSNNNNNKSPQNL) form a disordered region. Positions 122-135 (KQMNRQDSITDSTE) are enriched in polar residues. A compositionally biased stretch (low complexity) spans 136–150 (NNLSNNNNNKSPQNL).

As to expression, expressed in leaves, roots (endodermis-specific) and seedlings.

The protein resides in the nucleus. Its function is as follows. Transcription factors that activates genes required for endodermal differentiation but represses genes involved in proliferative divisions, thus regulating the transition from proliferation to differentiation in root endodermis. Required for Casparian strip formation by positively regulating the expression of the Casparian strip genes CASP1, PER64 and ESB1 and other endodermis-specific genes, thus triggering correct localized lignin biosynthesis in root endodermis and subsequently regulating global ion homeostasis. The polypeptide is Transcription factor MYB36 (Arabidopsis thaliana (Mouse-ear cress)).